Reading from the N-terminus, the 151-residue chain is Small ribosomal subunit protein uS15 (151 aa).

It belongs to the universal ribosomal protein uS15 family.

In Zea mays (Maize), this protein is Small ribosomal subunit protein uS15 (RPS13).